The following is a 539-amino-acid chain: Neutral amino acid transporter B(0) (539 aa).

Met-1 bears the N-acetylmethionine mark. At 1 to 52 (MVADPPKGDPKGYAAAEPTANGVSMLVPIEDVGSLKGGRCGSGDQVRRCLRA) the chain is on the cytoplasmic side. The chain crosses the membrane as a helical span at residues 53-82 (NLLVLLTVVAVVAGVALGLGVSGAGGAFAL). Over 83–95 (GPARLEAFSFPGE) the chain is Extracellular. The helical transmembrane segment at 96 to 117 (LLLRLLKMIILPLVVCSLIGGA) threads the bilayer. The Cytoplasmic segment spans residues 118-131 (ASLDPSALGRLGAW). A helical membrane pass occupies residues 132–154 (ALLFFLVTTLLASALGVGLALAL). Residues 155–223 (QPGAAFAAIN…GTLVKVPTGG (69 aa)) are Extracellular-facing. Asn-164 and Asn-213 each carry an N-linked (GlcNAc...) asparagine glycan. The chain crosses the membrane as a helical span at residues 224 to 247 (EVEGMNILGLVVFAIIFGVALRKL). Residues 248 to 256 (GPEGELLIR) are Cytoplasmic-facing. Residues 257–284 (FFNSFNDATMVLVSWIMWYAPVGILFLV) form a helical membrane-spanning segment. Residues 285–305 (AGKIVEMENVGLLFASLGKYI) lie on the Extracellular side of the membrane. Residues 306–327 (LCCLLGHAIHGLLTLPLIYFLF) form a helical membrane-spanning segment. Topologically, residues 328-332 (ARKNP) are cytoplasmic. Residues 333–363 (YRFLWGIMTPLATAFGTSSSSATLPLMMKCV) constitute an intramembrane region (discontinuously helical). The Cytoplasmic portion of the chain corresponds to 364–372 (EEKNGVARH). A helical membrane pass occupies residues 373 to 399 (ISRFILPIGATVNMDGAALFQCVAAVF). The Na(+) site is built by Gly-381, Thr-383, and Asn-385. Residues 400 to 412 (IAQLNHRSLDFVK) are Extracellular-facing. The segment at residues 413 to 446 (IITILVTATASSVGAAGIPSGGVLTLAIILEAVN) is an intramembrane region (discontinuously helical). Over 447 to 459 (LPVHDISLILAVD) the chain is Extracellular. Residues 460–481 (WLVDRSCTVLNVEGDAFGAGLL) form a helical membrane-spanning segment. Residues Asn-470 and Asp-474 each coordinate Na(+). Residues 482 to 539 (QSYLDRTENCNSVPELIQVKSEMPLAALPVPGEEGNPLLKGCPGPAGDADTCEKESVM) are Cytoplasmic-facing. 3 positions are modified to phosphoserine: Ser-493, Ser-502, and Ser-537. The tract at residues 518 to 539 (PLLKGCPGPAGDADTCEKESVM) is disordered.

Belongs to the dicarboxylate/amino acid:cation symporter (DAACS) (TC 2.A.23) family. SLC1A5 subfamily. As to quaternary structure, homotrimer.

The protein localises to the cell membrane. Its subcellular location is the melanosome. The enzyme catalyses L-glutamine(out) + L-serine(in) + Na(+)(out) = L-glutamine(in) + L-serine(out) + Na(+)(in). The catalysed reaction is L-glutamine(in) + L-serine(out) + Na(+)(out) = L-glutamine(out) + L-serine(in) + Na(+)(in). It catalyses the reaction L-threonine(in) + L-glutamine(out) + Na(+)(out) = L-threonine(out) + L-glutamine(in) + Na(+)(in). It carries out the reaction L-threonine(out) + L-glutamine(in) + Na(+)(out) = L-threonine(in) + L-glutamine(out) + Na(+)(in). The enzyme catalyses L-asparagine(in) + L-glutamine(out) + Na(+)(out) = L-asparagine(out) + L-glutamine(in) + Na(+)(in). The catalysed reaction is L-asparagine(out) + L-glutamine(in) + Na(+)(out) = L-asparagine(in) + L-glutamine(out) + Na(+)(in). It catalyses the reaction L-glutamine(in) + L-alanine(out) + Na(+)(out) = L-glutamine(out) + L-alanine(in) + Na(+)(in). It carries out the reaction L-valine(out) + L-glutamine(in) + Na(+)(out) = L-valine(in) + L-glutamine(out) + Na(+)(in). The enzyme catalyses L-glutamine(in) + L-methionine(out) + Na(+)(out) = L-glutamine(out) + L-methionine(in) + Na(+)(in). The catalysed reaction is L-glutamine(in) + L-glutamate(out) + Na(+)(out) + H(+)(out) = L-glutamine(out) + L-glutamate(in) + Na(+)(in) + H(+)(in). It catalyses the reaction D-serine(in) + L-glutamine(out) + Na(+)(out) = D-serine(out) + L-glutamine(in) + Na(+)(in). It carries out the reaction D-serine(in) + L-alanine(out) + Na(+)(out) = D-serine(out) + L-alanine(in) + Na(+)(in). The enzyme catalyses nitrate(in) = nitrate(out). The catalysed reaction is iodide(out) = iodide(in). It catalyses the reaction thiocyanate(in) = thiocyanate(out). Sodium-coupled antiporter of neutral amino acids. In a tri-substrate transport cycle, exchanges neutral amino acids between the extracellular and intracellular compartments, coupled to the inward cotransport of at least one sodium ion. The preferred substrate is the essential amino acid L-glutamine, a precursor for biosynthesis of proteins, nucleotides and amine sugars as well as an alternative fuel for mitochondrial oxidative phosphorylation. Exchanges L-glutamine with other neutral amino acids such as L-serine, L-threonine and L-asparagine in a bidirectional way. Provides L-glutamine to proliferating stem and activated cells driving the metabolic switch toward cell differentiation. The transport cycle is usually pH-independent, with the exception of L-glutamate. Transports extracellular L-glutamate coupled to the cotransport of one proton and one sodium ion in exchange for intracellular L-glutamine counter-ion. May provide for L-glutamate uptake in glial cells regulating glutamine/glutamate cycle in the nervous system. Can transport D-amino acids. Mediates D-serine release from the retinal glia potentially affecting NMDA receptor function in retinal neurons. Displays sodium- and amino acid-dependent but uncoupled channel-like anion conductance with a preference SCN(-) &gt;&gt; NO3(-) &gt; I(-) &gt; Cl(-). Through binding of the fusogenic protein syncytin-1/ERVW-1 may mediate trophoblasts syncytialization, the spontaneous fusion of their plasma membranes, an essential process in placental development. The polypeptide is Neutral amino acid transporter B(0) (SLC1A5) (Bos taurus (Bovine)).